The chain runs to 167 residues: Ion-translocating oxidoreductase complex subunit B (167 aa).

Residues 1-22 (MITLIIFSFLSFLLGIILSFTA) form a hydrophobic region. The 4Fe-4S domain maps to 28–87 (QEDPIVAIVNELLPQSQCAQCGYSGCYPYAKAIVENSEKINKCIPGGTDLISAISSVLSI). 12 residues coordinate [4Fe-4S] cluster: C45, C48, C53, C70, C113, C116, C119, C123, C143, C146, C149, and C153. 2 4Fe-4S ferredoxin-type domains span residues 104-133 (NTVL…GAPN) and 134-163 (FIHT…IKKE).

It belongs to the 4Fe4S bacterial-type ferredoxin family. RnfB subfamily. In terms of assembly, the complex is composed of six subunits: RnfA, RnfB, RnfC, RnfD, RnfE and RnfG. The cofactor is [4Fe-4S] cluster.

It is found in the cell inner membrane. Part of a membrane-bound complex that couples electron transfer with translocation of ions across the membrane. In Buchnera aphidicola subsp. Acyrthosiphon pisum (strain 5A), this protein is Ion-translocating oxidoreductase complex subunit B.